Consider the following 944-residue polypeptide: Protocadherin gamma-C5 (944 aa).

The signal sequence occupies residues 1–29; sequence MGPKTLPQLAGKWQVLCMLSLCCWGWVSG. Cadherin domains follow at residues 30–133, 134–242, 243–350, 351–454, 455–564, and 571–677; these read QLRY…SPSF, ATPE…APTF, QSSV…APEV, LLAS…APRF, NQQL…APAV, and WEHS…MPKS. Topologically, residues 30–693 are extracellular; that stretch reads QLRYSVVEES…PPERSDLTLY (664 aa). Residues Asn-265, Asn-443, and Asn-547 are each glycosylated (N-linked (GlcNAc...) asparagine). The chain crosses the membrane as a helical span at residues 694–714; that stretch reads LIVALATVSLLSLVTFTFLSA. Residues 715-944 are Cytoplasmic-facing; that stretch reads KCLQGNADGD…KKKSGKKEKK (230 aa). 3 disordered regions span residues 722 to 747, 812 to 853, and 914 to 944; these read DGDG…QSSP, SNTL…WPNN, and ATLT…KEKK. Positions 820 to 853 are enriched in polar residues; the sequence is QQAPPNTDWRFSQAQRPGTSGSQNGDDTGTWPNN. The segment covering 934-944 has biased composition (basic residues); that stretch reads NKKKSGKKEKK.

Its subcellular location is the cell membrane. Its function is as follows. Potential calcium-dependent cell-adhesion protein. May be involved in the establishment and maintenance of specific neuronal connections in the brain. This chain is Protocadherin gamma-C5 (PCDHGC5), found in Pan troglodytes (Chimpanzee).